A 402-amino-acid polypeptide reads, in one-letter code: 4-hydroxy-3-methylbut-2-enyl diphosphate reductase (402 aa).

Cysteine 66 serves as a coordination point for [4Fe-4S] cluster. Histidine 96 contributes to the (2E)-4-hydroxy-3-methylbut-2-enyl diphosphate binding site. Histidine 96 provides a ligand contact to dimethylallyl diphosphate. Histidine 96 is a binding site for isopentenyl diphosphate. Cysteine 157 is a binding site for [4Fe-4S] cluster. (2E)-4-hydroxy-3-methylbut-2-enyl diphosphate is bound at residue histidine 185. A dimethylallyl diphosphate-binding site is contributed by histidine 185. Residue histidine 185 coordinates isopentenyl diphosphate. Residue glutamate 187 is the Proton donor of the active site. (2E)-4-hydroxy-3-methylbut-2-enyl diphosphate is bound at residue threonine 250. Cysteine 288 provides a ligand contact to [4Fe-4S] cluster. Residues serine 317, serine 318, asparagine 319, and serine 379 each coordinate (2E)-4-hydroxy-3-methylbut-2-enyl diphosphate. Residues serine 317, serine 318, asparagine 319, and serine 379 each coordinate dimethylallyl diphosphate. 4 residues coordinate isopentenyl diphosphate: serine 317, serine 318, asparagine 319, and serine 379.

The protein belongs to the IspH family. [4Fe-4S] cluster serves as cofactor.

It catalyses the reaction isopentenyl diphosphate + 2 oxidized [2Fe-2S]-[ferredoxin] + H2O = (2E)-4-hydroxy-3-methylbut-2-enyl diphosphate + 2 reduced [2Fe-2S]-[ferredoxin] + 2 H(+). The enzyme catalyses dimethylallyl diphosphate + 2 oxidized [2Fe-2S]-[ferredoxin] + H2O = (2E)-4-hydroxy-3-methylbut-2-enyl diphosphate + 2 reduced [2Fe-2S]-[ferredoxin] + 2 H(+). It functions in the pathway isoprenoid biosynthesis; dimethylallyl diphosphate biosynthesis; dimethylallyl diphosphate from (2E)-4-hydroxy-3-methylbutenyl diphosphate: step 1/1. Its pathway is isoprenoid biosynthesis; isopentenyl diphosphate biosynthesis via DXP pathway; isopentenyl diphosphate from 1-deoxy-D-xylulose 5-phosphate: step 6/6. In terms of biological role, catalyzes the conversion of 1-hydroxy-2-methyl-2-(E)-butenyl 4-diphosphate (HMBPP) into a mixture of isopentenyl diphosphate (IPP) and dimethylallyl diphosphate (DMAPP). Acts in the terminal step of the DOXP/MEP pathway for isoprenoid precursor biosynthesis. In Microcystis aeruginosa (strain NIES-843 / IAM M-2473), this protein is 4-hydroxy-3-methylbut-2-enyl diphosphate reductase.